Consider the following 495-residue polypeptide: Bifunctional protein GlmU (495 aa).

The segment at 1 to 241 (MPQQTAVVVL…AAKVTGVNDR (241 aa)) is pyrophosphorylase. UDP-N-acetyl-alpha-D-glucosamine is bound by residues 10–13 (LAAG), Lys24, Gln81, and 86–87 (GT). Asp112 serves as a coordination point for Mg(2+). The UDP-N-acetyl-alpha-D-glucosamine site is built by Gly151, Glu166, Asn181, and Asn239. Asn239 is a Mg(2+) binding site. The interval 242–262 (VQLSIATRTMNRYILERHMRA) is linker. The segment at 263 to 495 (GVTIIDPAST…QATEQKDGEQ (233 aa)) is N-acetyltransferase. The UDP-N-acetyl-alpha-D-glucosamine site is built by Arg344 and Lys362. His374 functions as the Proton acceptor in the catalytic mechanism. Residues Tyr377 and Asn388 each contribute to the UDP-N-acetyl-alpha-D-glucosamine site. Acetyl-CoA contacts are provided by residues Ala391, 397 to 398 (NY), Ser416, and Ala434. The tract at residues 467 to 495 (GTAAATAAAQALAADEKSSQATEQKDGEQ) is disordered. The segment covering 468 to 479 (TAAATAAAQALA) has biased composition (low complexity). Residues 480 to 495 (ADEKSSQATEQKDGEQ) show a composition bias toward basic and acidic residues.

This sequence in the N-terminal section; belongs to the N-acetylglucosamine-1-phosphate uridyltransferase family. It in the C-terminal section; belongs to the transferase hexapeptide repeat family. In terms of assembly, homotrimer. It depends on Mg(2+) as a cofactor.

The protein localises to the cytoplasm. The catalysed reaction is alpha-D-glucosamine 1-phosphate + acetyl-CoA = N-acetyl-alpha-D-glucosamine 1-phosphate + CoA + H(+). It carries out the reaction N-acetyl-alpha-D-glucosamine 1-phosphate + UTP + H(+) = UDP-N-acetyl-alpha-D-glucosamine + diphosphate. The protein operates within nucleotide-sugar biosynthesis; UDP-N-acetyl-alpha-D-glucosamine biosynthesis; N-acetyl-alpha-D-glucosamine 1-phosphate from alpha-D-glucosamine 6-phosphate (route II): step 2/2. It functions in the pathway nucleotide-sugar biosynthesis; UDP-N-acetyl-alpha-D-glucosamine biosynthesis; UDP-N-acetyl-alpha-D-glucosamine from N-acetyl-alpha-D-glucosamine 1-phosphate: step 1/1. It participates in bacterial outer membrane biogenesis; LPS lipid A biosynthesis. Functionally, catalyzes the last two sequential reactions in the de novo biosynthetic pathway for UDP-N-acetylglucosamine (UDP-GlcNAc). The C-terminal domain catalyzes the transfer of acetyl group from acetyl coenzyme A to glucosamine-1-phosphate (GlcN-1-P) to produce N-acetylglucosamine-1-phosphate (GlcNAc-1-P), which is converted into UDP-GlcNAc by the transfer of uridine 5-monophosphate (from uridine 5-triphosphate), a reaction catalyzed by the N-terminal domain. The protein is Bifunctional protein GlmU of Nocardia farcinica (strain IFM 10152).